Reading from the N-terminus, the 216-residue chain is Probable transaldolase (216 aa).

The Schiff-base intermediate with substrate role is filled by K83.

It belongs to the transaldolase family. Type 3B subfamily.

The protein localises to the cytoplasm. The enzyme catalyses D-sedoheptulose 7-phosphate + D-glyceraldehyde 3-phosphate = D-erythrose 4-phosphate + beta-D-fructose 6-phosphate. It participates in carbohydrate degradation; pentose phosphate pathway; D-glyceraldehyde 3-phosphate and beta-D-fructose 6-phosphate from D-ribose 5-phosphate and D-xylulose 5-phosphate (non-oxidative stage): step 2/3. Functionally, transaldolase is important for the balance of metabolites in the pentose-phosphate pathway. The protein is Probable transaldolase of Sorangium cellulosum (strain So ce56) (Polyangium cellulosum (strain So ce56)).